We begin with the raw amino-acid sequence, 252 residues long: Neurotrophic factor BDNF precursor form (252 aa).

Positions 1–18 (MTILFLTMVISYFGCMKA) are cleaved as a signal peptide. The propeptide occupies 19 to 133 (APMKEANVRG…AANMSMRVRR (115 aa)). The segment at 43–62 (LESVNGPKAGSRGLTSSSSS) is disordered. An N-linked (GlcNAc...) asparagine glycan is attached at N126. 3 disulfides stabilise this stretch: C146–C213, C191–C242, and C201–C244.

It belongs to the NGF-beta family. Monomers and homodimers. Binds to NTRK2/TRKB. Can form heterodimers with other neurotrophin family members, such as NTF3 and NTF4 (in vitro), but the physiological relevance of this is not clear. BDNF precursor form: interacts with the heterodimer formed by NGFR and SORCS2. Mature BDNF has much lower affinity for the heterodimer formed by NGFR and SORCS2. N-glycosylated and glycosulfated, contrary to mature BDNF. Post-translationally, mature BDNF is produced by proteolytic removal of the propeptide, catalyzed by a FURIN family member. In addition, the precursor form is proteolytically cleaved within the propeptide, but this is not an obligatory intermediate for the production of mature BDNF. Can be converted into mature BDNF by plasmin (PLG). As to expression, brain and central nervous system.

Its subcellular location is the secreted. Its function is as follows. Important signaling molecule that activates signaling cascades downstream of NTRK2. During development, promotes the survival and differentiation of selected neuronal populations of the peripheral and central nervous systems. Participates in axonal growth, pathfinding and in the modulation of dendritic growth and morphology. Major regulator of synaptic transmission and plasticity at adult synapses in many regions of the CNS. The versatility of BDNF is emphasized by its contribution to a range of adaptive neuronal responses including long-term potentiation (LTP), long-term depression (LTD), certain forms of short-term synaptic plasticity, as well as homeostatic regulation of intrinsic neuronal excitability. In terms of biological role, important signaling molecule that activates signaling cascades downstream of NTRK2. Activates signaling cascades via the heterodimeric receptor formed by NGFR and SORCS2. Signaling via NGFR and SORCS2 plays a role in synaptic plasticity and long-term depression (LTD). Binding to NGFR and SORCS2 promotes neuronal apoptosis. Promotes neuronal growth cone collapse. The sequence is that of Neurotrophic factor BDNF precursor form (BDNF) from Sus scrofa (Pig).